The sequence spans 370 residues: NADH-quinone oxidoreductase subunit D (370 aa).

It belongs to the complex I 49 kDa subunit family. In terms of assembly, NDH-1 is composed of 14 different subunits. Subunits NuoB, C, D, E, F, and G constitute the peripheral sector of the complex.

It is found in the cell membrane. The enzyme catalyses a quinone + NADH + 5 H(+)(in) = a quinol + NAD(+) + 4 H(+)(out). Functionally, NDH-1 shuttles electrons from NADH, via FMN and iron-sulfur (Fe-S) centers, to quinones in the respiratory chain. The immediate electron acceptor for the enzyme in this species is believed to be a menaquinone. Couples the redox reaction to proton translocation (for every two electrons transferred, four hydrogen ions are translocated across the cytoplasmic membrane), and thus conserves the redox energy in a proton gradient. The chain is NADH-quinone oxidoreductase subunit D from Clostridium beijerinckii (strain ATCC 51743 / NCIMB 8052) (Clostridium acetobutylicum).